The chain runs to 364 residues: DNA replication and repair protein RecF (364 aa).

Residue 30–37 coordinates ATP; that stretch reads GANGSGKT.

Belongs to the RecF family.

The protein resides in the cytoplasm. In terms of biological role, the RecF protein is involved in DNA metabolism; it is required for DNA replication and normal SOS inducibility. RecF binds preferentially to single-stranded, linear DNA. It also seems to bind ATP. The polypeptide is DNA replication and repair protein RecF (Sodalis glossinidius (strain morsitans)).